Consider the following 229-residue polypeptide: Potassium/proton antiporter CemA (229 aa).

The next 3 membrane-spanning stretches (helical) occupy residues 7–27, 106–126, and 189–209; these read LTPL…SISF, IILH…YSIL, and IISG…KYWI.

Belongs to the CemA family.

It localises to the plastid. The protein resides in the chloroplast inner membrane. The catalysed reaction is K(+)(in) + H(+)(out) = K(+)(out) + H(+)(in). In terms of biological role, contributes to K(+)/H(+) antiport activity by supporting proton efflux to control proton extrusion and homeostasis in chloroplasts in a light-dependent manner to modulate photosynthesis. Prevents excessive induction of non-photochemical quenching (NPQ) under continuous-light conditions. Indirectly promotes efficient inorganic carbon uptake into chloroplasts. The protein is Potassium/proton antiporter CemA of Liriodendron tulipifera (Tuliptree).